The sequence spans 432 residues: Histidine--tRNA ligase (432 aa).

It belongs to the class-II aminoacyl-tRNA synthetase family. In terms of assembly, homodimer.

It is found in the cytoplasm. It carries out the reaction tRNA(His) + L-histidine + ATP = L-histidyl-tRNA(His) + AMP + diphosphate + H(+). This Ralstonia nicotianae (strain ATCC BAA-1114 / GMI1000) (Ralstonia solanacearum) protein is Histidine--tRNA ligase.